A 389-amino-acid polypeptide reads, in one-letter code: Chalcone synthase 1 (389 aa).

Cysteine 164 is a catalytic residue.

It belongs to the thiolase-like superfamily. Chalcone/stilbene synthases family.

It carries out the reaction (E)-4-coumaroyl-CoA + 3 malonyl-CoA + 3 H(+) = 2',4,4',6'-tetrahydroxychalcone + 3 CO2 + 4 CoA. Its pathway is secondary metabolite biosynthesis; flavonoid biosynthesis. Functionally, the primary product of this enzyme is 4,2',4',6'-tetrahydroxychalcone (also termed naringenin-chalcone or chalcone) which can under specific conditions spontaneously isomerize into naringenin. This Medicago sativa (Alfalfa) protein is Chalcone synthase 1 (CHS1).